The primary structure comprises 296 residues: Prostate androgen-regulated mucin-like protein 1 homolog (296 aa).

Positions 1 to 20 (MVCKALITLCIFAAGLRVQG) are cleaved as a signal peptide. The Extracellular segment spans residues 21-244 (SPTPTLLPVS…EVENALSSGS (224 aa)). N62, N96, and N108 each carry an N-linked (GlcNAc...) asparagine glycan. Residues 73-220 (LTSQLPTHPR…SPQDTEPGKV (148 aa)) are disordered. Positions 80–96 (HPREEAVTSPPLKREVN) are enriched in basic and acidic residues. Residues 97–111 (STDSSPTGFSSNSSG) show a composition bias toward low complexity. Residues 125 to 145 (SPETSVPATGSQSPTLLFSQG) are compositionally biased toward polar residues. Low complexity-rich tracts occupy residues 146-175 (PTSASTSPATSPSEPLSASVTSNHSSTVNN) and 195-205 (SHTPTSHVTEP). An N-linked (GlcNAc...) asparagine glycan is attached at N168. Over residues 206 to 217 (VPKEKSPQDTEP) the composition is skewed to basic and acidic residues. The chain crosses the membrane as a helical span at residues 245–265 (IAAITVTVIAVVLLVFGAAAY). Over 266-296 (LKIRHSSYGRLLDDHDYGSWGNYNNPLYDDS) the chain is Cytoplasmic. Phosphoserine is present on S284.

The protein belongs to the PARM family. In terms of processing, highly N-glycosylated and O-glycosylated. In terms of tissue distribution, expressed in prostate. Detected in other organs at low levels, these include the heart and various tissues of the urogenital tract. Not detected in mammary gland.

The protein localises to the cell membrane. The protein resides in the golgi apparatus membrane. Its subcellular location is the endosome membrane. May regulate TLP1 expression and telomerase activity, thus enabling certain prostatic cells to resist apoptosis. In Rattus norvegicus (Rat), this protein is Prostate androgen-regulated mucin-like protein 1 homolog (Parm1).